The sequence spans 202 residues: N-(5'-phosphoribosyl)anthranilate isomerase (202 aa).

The protein belongs to the TrpF family.

The catalysed reaction is N-(5-phospho-beta-D-ribosyl)anthranilate = 1-(2-carboxyphenylamino)-1-deoxy-D-ribulose 5-phosphate. The protein operates within amino-acid biosynthesis; L-tryptophan biosynthesis; L-tryptophan from chorismate: step 3/5. The polypeptide is N-(5'-phosphoribosyl)anthranilate isomerase (Listeria monocytogenes serotype 4b (strain CLIP80459)).